Here is a 396-residue protein sequence, read N- to C-terminus: Ribosomal RNA large subunit methyltransferase I (396 aa).

Residues 2 to 81 form the PUA domain; it reads TVSIYLAKGR…EAIDKDFFVR (80 aa).

Belongs to the methyltransferase superfamily. RlmI family.

The protein localises to the cytoplasm. It carries out the reaction cytidine(1962) in 23S rRNA + S-adenosyl-L-methionine = 5-methylcytidine(1962) in 23S rRNA + S-adenosyl-L-homocysteine + H(+). Its function is as follows. Specifically methylates the cytosine at position 1962 (m5C1962) of 23S rRNA. This chain is Ribosomal RNA large subunit methyltransferase I, found in Aliivibrio fischeri (strain MJ11) (Vibrio fischeri).